The sequence spans 152 residues: TOMM20-like protein 1 (152 aa).

At 1–9 (MPSVRSLLR) the chain is on the mitochondrial intermembrane side. The helical transmembrane segment at 10 to 29 (LLAAAAACGAFAFLGYCIYL) threads the bilayer. At 30–152 (NRKRRGDPAF…EQDCLEDDPD (123 aa)) the chain is on the cytoplasmic side. Residues 43 to 62 (LRDKRRAEPQKAEEQGTQLW) form a disordered region. Residues 47 to 56 (RRAEPQKAEE) are compositionally biased toward basic and acidic residues.

The protein belongs to the Tom20 family.

The protein resides in the mitochondrion outer membrane. In Homo sapiens (Human), this protein is TOMM20-like protein 1 (TOMM20L).